The primary structure comprises 98 residues: MTLTTMNILLAFFFSLLGTLIFRSHLMSTLLCLEGMMLSLFIMTTITALDTQSMVMYTIPITTLVFAACEAAVGLALLTMVSNTYGTDHVQNLNLLQC.

3 consecutive transmembrane segments (helical) span residues 2 to 22 (TLTT…TLIF), 29 to 49 (TLLC…ITAL), and 61 to 81 (ITTL…LTMV).

Belongs to the complex I subunit 4L family. In terms of assembly, core subunit of respiratory chain NADH dehydrogenase (Complex I) which is composed of 45 different subunits.

It is found in the mitochondrion inner membrane. The catalysed reaction is a ubiquinone + NADH + 5 H(+)(in) = a ubiquinol + NAD(+) + 4 H(+)(out). Its function is as follows. Core subunit of the mitochondrial membrane respiratory chain NADH dehydrogenase (Complex I) which catalyzes electron transfer from NADH through the respiratory chain, using ubiquinone as an electron acceptor. Part of the enzyme membrane arm which is embedded in the lipid bilayer and involved in proton translocation. The chain is NADH-ubiquinone oxidoreductase chain 4L (MT-ND4L) from Oxymycterus rufus (Red hocicudo).